Here is a 564-residue protein sequence, read N- to C-terminus: Potassium-transporting ATPase potassium-binding subunit (564 aa).

10 helical membrane-spanning segments follow: residues 4 to 24 (YDYW…PFLG), 67 to 87 (TLAL…ILLF), 135 to 155 (VGLT…LVAL), 179 to 199 (LYGL…QGVP), 258 to 278 (FEVA…GHYV), 286 to 306 (AIIG…LWAE), 382 to 402 (AGLY…GLMI), 420 to 440 (LLVV…AIAA), 487 to 507 (LMLG…VLAL), and 528 to 548 (GPLF…LTFL).

Belongs to the KdpA family. In terms of assembly, the system is composed of three essential subunits: KdpA, KdpB and KdpC.

Its subcellular location is the cell inner membrane. Its function is as follows. Part of the high-affinity ATP-driven potassium transport (or Kdp) system, which catalyzes the hydrolysis of ATP coupled with the electrogenic transport of potassium into the cytoplasm. This subunit binds the periplasmic potassium ions and delivers the ions to the membrane domain of KdpB through an intramembrane tunnel. This chain is Potassium-transporting ATPase potassium-binding subunit, found in Pseudomonas fluorescens (strain Pf0-1).